A 442-amino-acid polypeptide reads, in one-letter code: METLWDGILSHLKGRLSRPTFETWIKPATAQQFEQDCLIIRTPNPFARSWLQQHYAGAIAQAGEQVIGRPIQVDFIVSEQSEEALKPVIEREPAPAAPPANVASLNSKYTFSRFVVGANNRMAHVAALAVAEMPGCNYNPLFLCGGVGLGKTHLMQAIGHYRLDIDTRTKIAYVSTERFANELIEAIRRDAMQTFREHYRRVDLLMIDDIQFIEGKEYTQEEFFHTFNALYESGKQIVIASDRPPQLIPRLQERLSSRFSMGLITDIQQPDIETRMAILQKKAEYENMFVPQDVIHHIASAYTTNIRELEGALIRAVAYVSISGLPMTVETISPILSPPRTRGEITDEAILELVCDELKVSAEDMRSDSRRRDISQARQLCMYLLRKYTDLSLPKIGQALGGKDHTTVLYAIDKIEQSKIRDPEVQRLLQRLGNRLEADARH.

The segment at M1 to R69 is domain I, interacts with DnaA modulators. The tract at residues R69 to A103 is domain II. The interval S104 to V320 is domain III, AAA+ region. ATP contacts are provided by G148, G150, K151, and T152. The domain IV, binds dsDNA stretch occupies residues S321 to H442.

Belongs to the DnaA family. Oligomerizes as a right-handed, spiral filament on DNA at oriC.

The protein resides in the cytoplasm. Its function is as follows. Plays an essential role in the initiation and regulation of chromosomal replication. ATP-DnaA binds to the origin of replication (oriC) to initiate formation of the DNA replication initiation complex once per cell cycle. Binds the DnaA box (a 9 base pair repeat at the origin) and separates the double-stranded (ds)DNA. Forms a right-handed helical filament on oriC DNA; dsDNA binds to the exterior of the filament while single-stranded (ss)DNA is stabiized in the filament's interior. The ATP-DnaA-oriC complex binds and stabilizes one strand of the AT-rich DNA unwinding element (DUE), permitting loading of DNA polymerase. After initiation quickly degrades to an ADP-DnaA complex that is not apt for DNA replication. Binds acidic phospholipids. The chain is Chromosomal replication initiator protein DnaA from Gloeobacter violaceus (strain ATCC 29082 / PCC 7421).